Reading from the N-terminus, the 259-residue chain is Sugar fermentation stimulation protein homolog (259 aa).

Belongs to the SfsA family.

The chain is Sugar fermentation stimulation protein homolog from Prochlorococcus marinus (strain MIT 9303).